A 212-amino-acid chain; its full sequence is Outer surface protein C (212 aa).

Positions 1-18 are cleaved as a signal peptide; the sequence is MKKNTLSAILMTLFLFIS. C19 carries the N-palmitoyl cysteine lipid modification. C19 carries S-diacylglycerol cysteine lipidation.

This sequence belongs to the OspC lipoprotein family. In terms of assembly, homodimer. Interacts with tick Ixodes ricinus salivary protein Iric-1. Binds human (host) plasminogen. The N-terminus is blocked.

It is found in the cell outer membrane. It localises to the cell surface. Its function is as follows. Major immunodominant protein in mammalian hosts. Required for initial stages of mammalian infection. Inhibits macrophage-mediated phagocytosis of the bacteria. Binds human plasminogen; this probably confers an extracellular protease activity on the bacteria that allows it to traverse tissue. Unlike closely related strain B31, its interaction with Ixodes ricinus salivary protein Iric-1 does not protect against antibody-mediated destruction in vitro. This is Outer surface protein C from Borreliella afzelii (strain PKo) (Borrelia afzelii).